Consider the following 142-residue polypeptide: Large ribosomal subunit protein uL16 (142 aa).

This sequence belongs to the universal ribosomal protein uL16 family. In terms of assembly, part of the 50S ribosomal subunit.

Binds 23S rRNA and is also seen to make contacts with the A and possibly P site tRNAs. This is Large ribosomal subunit protein uL16 from Fervidobacterium nodosum (strain ATCC 35602 / DSM 5306 / Rt17-B1).